A 408-amino-acid chain; its full sequence is Histidine--tRNA ligase (408 aa).

The protein belongs to the class-II aminoacyl-tRNA synthetase family. In terms of assembly, homodimer.

The protein resides in the cytoplasm. The catalysed reaction is tRNA(His) + L-histidine + ATP = L-histidyl-tRNA(His) + AMP + diphosphate + H(+). In Campylobacter jejuni subsp. doylei (strain ATCC BAA-1458 / RM4099 / 269.97), this protein is Histidine--tRNA ligase.